We begin with the raw amino-acid sequence, 304 residues long: Ribonuclease Z (304 aa).

Residues His-64, His-66, Asp-68, His-69, His-141, Asp-209, and His-267 each coordinate Zn(2+). Asp-68 serves as the catalytic Proton acceptor.

This sequence belongs to the RNase Z family. In terms of assembly, homodimer. Requires Zn(2+) as cofactor.

The catalysed reaction is Endonucleolytic cleavage of RNA, removing extra 3' nucleotides from tRNA precursor, generating 3' termini of tRNAs. A 3'-hydroxy group is left at the tRNA terminus and a 5'-phosphoryl group is left at the trailer molecule.. In terms of biological role, zinc phosphodiesterase, which displays some tRNA 3'-processing endonuclease activity. Probably involved in tRNA maturation, by removing a 3'-trailer from precursor tRNA. This chain is Ribonuclease Z, found in Thermoplasma volcanium (strain ATCC 51530 / DSM 4299 / JCM 9571 / NBRC 15438 / GSS1).